An 880-amino-acid chain; its full sequence is Alanine--tRNA ligase (880 aa).

Residues His567, His571, Cys669, and His673 each contribute to the Zn(2+) site.

Belongs to the class-II aminoacyl-tRNA synthetase family. Zn(2+) serves as cofactor.

The protein localises to the cytoplasm. It catalyses the reaction tRNA(Ala) + L-alanine + ATP = L-alanyl-tRNA(Ala) + AMP + diphosphate. In terms of biological role, catalyzes the attachment of alanine to tRNA(Ala) in a two-step reaction: alanine is first activated by ATP to form Ala-AMP and then transferred to the acceptor end of tRNA(Ala). Also edits incorrectly charged Ser-tRNA(Ala) and Gly-tRNA(Ala) via its editing domain. This is Alanine--tRNA ligase from Bacillus thuringiensis subsp. konkukian (strain 97-27).